Consider the following 316-residue polypeptide: Olfactory receptor 2AG1 (316 aa).

Residues 1 to 25 (MELWNFTLGSGFILVGILNDSGSPE) are Extracellular-facing. 2 N-linked (GlcNAc...) asparagine glycosylation sites follow: asparagine 5 and asparagine 19. The helical transmembrane segment at 26 to 49 (LLCATITILYLLALISNGLLLLAI) threads the bilayer. The Cytoplasmic segment spans residues 50-57 (TMEARLHM). A helical transmembrane segment spans residues 58–79 (PMYLLLGQLSLMDLLFTSVVTP). Residues 80–100 (KALADFLRRENTISFGGCALQ) are Extracellular-facing. Residues cysteine 97 and cysteine 189 are joined by a disulfide bond. A helical membrane pass occupies residues 101–120 (MFLALTMGGAEDLLLAFMAY). The Cytoplasmic segment spans residues 121–139 (DRYVAICHPLTYMTLMSSR). The chain crosses the membrane as a helical span at residues 140 to 158 (ACWLMVATSWILASLSALI). Topologically, residues 159–195 (YTVYTMHYPFCRAQEIRHLLCEIPHLLKVACADTSRY) are extracellular. A helical membrane pass occupies residues 196–219 (ELMVYVMGVTFLIPSLAAILASYT). The Cytoplasmic portion of the chain corresponds to 220-236 (QILLTVLHMPSNEGRKK). A helical membrane pass occupies residues 237 to 259 (ALVTCSSHLTVVGMFYGAATFMY). Residues 260–272 (VLPSSFHSTRQDN) are Extracellular-facing. A helical transmembrane segment spans residues 273-292 (IISVFYTIVTPALNPLIYSL). At 293 to 316 (RNKEVMRALRRVLGKYMLPAHSTL) the chain is on the cytoplasmic side.

The protein belongs to the G-protein coupled receptor 1 family.

The protein localises to the cell membrane. Odorant receptor. The polypeptide is Olfactory receptor 2AG1 (OR2AG1) (Homo sapiens (Human)).